Reading from the N-terminus, the 124-residue chain is MKVLILVLLGVVILQAAPIRKLEDLLPTRNPPQNELVYWCTYANQCDFCWECIHGICRNRIQADWPVIHQNDWIINCTVSRWNGICRYYEGPRGHIDHEMDCANPTYHTYPHIEYMKIYVRDDL.

The signal sequence occupies residues 1–16 (MKVLILVLLGVVILQA). N-linked (GlcNAc...) asparagine; by host glycosylation occurs at N76.

Belongs to the asfivirus MGF 110 family.

Its function is as follows. Plays a role in virus cell tropism, and may be required for efficient virus replication in macrophages. The sequence is that of Protein MGF 110-8L from African swine fever virus (isolate Pig/Kenya/KEN-50/1950) (ASFV).